Here is a 233-residue protein sequence, read N- to C-terminus: Large ribosomal subunit protein uL1 (233 aa).

This sequence belongs to the universal ribosomal protein uL1 family. As to quaternary structure, part of the 50S ribosomal subunit.

Functionally, binds directly to 23S rRNA. The L1 stalk is quite mobile in the ribosome, and is involved in E site tRNA release. Protein L1 is also a translational repressor protein, it controls the translation of the L11 operon by binding to its mRNA. This is Large ribosomal subunit protein uL1 from Aeromonas salmonicida (strain A449).